Reading from the N-terminus, the 396-residue chain is Probable isocitrate dehydrogenase [NAD] gamma 2, mitochondrial (396 aa).

Residues 1-25 (MLAVTSCSMKTVLQYAVFLGHSREV) constitute a mitochondrion transit peptide. Residue threonine 117 coordinates citrate. Residues arginine 133, arginine 164, and aspartate 251 each coordinate substrate. Mn(2+) is bound at residue aspartate 251. ADP is bound at residue asparagine 321.

This sequence belongs to the isocitrate and isopropylmalate dehydrogenases family. In terms of assembly, heterooligomer of subunits alpha (IDH3A), beta (IDH3B), and gamma (IDH3G) in the apparent ratio of 2:1:1. The heterodimer containing one IDH3A and one IDH3B subunit and the heterodimer containing one IDH3A and one IDH3G subunit assemble into a heterotetramer (which contains two subunits of IDH3A, one of IDH3B and one of IDH3G) and further into the heterooctamer. It depends on Mg(2+) as a cofactor. The cofactor is Mn(2+).

It localises to the mitochondrion. With respect to regulation, the heterotetramer and the heterodimer composed of IDH3A and IDH3G subunits can be allosterically activated by citrate (CIT) or/and ADP, and the two activators can act independently or synergistically. The heterodimer composed of IDH3A and IDH3B subunits cannot be allosterically regulated and the allosteric regulation of the heterotetramer is through the IDH3G subunit and not the IDH3B subunit. The IDH3G subunit contains the allosteric site which consists of a CIT-binding site and an ADP-binding site, and the binding of CIT and ADP causes conformational changes at the allosteric site which are transmitted to the active site in the catalytic subunit (IDH3A) through a cascade of conformational changes at the heterodimer interface, leading to stabilization of the isocitrate-binding at the active site and thus activation of the enzyme. ATP can activate the heterotetramer and the heterodimer composed of IDH3A and IDH3G subunits at low concentrations but inhibits their activities at high concentrations, whereas ATP exhibits only inhibitory effect on the heterodimer composed of IDH3A and IDH3B subunits. Regulatory subunit which plays a role in the allosteric regulation of the enzyme catalyzing the decarboxylation of isocitrate (ICT) into alpha-ketoglutarate. The heterodimer composed of the alpha (IDH3A) and beta (IDH3B) subunits and the heterodimer composed of the alpha (IDH3A) and gamma (IDH3G) subunits, have considerable basal activity but the full activity of the heterotetramer (containing two subunits of IDH3A, one of IDH3B and one of IDH3G) requires the assembly and cooperative function of both heterodimers. In Mus musculus (Mouse), this protein is Probable isocitrate dehydrogenase [NAD] gamma 2, mitochondrial.